Here is a 653-residue protein sequence, read N- to C-terminus: ATP-dependent zinc metalloprotease FtsH 1 (653 aa).

Residues Met-1–Ser-7 are Cytoplasmic-facing. The helical transmembrane segment at Ala-8 to Pro-28 threads the bilayer. Residues Gly-29–Gly-105 are Extracellular-facing. Residues Trp-106 to Leu-126 form a helical membrane-spanning segment. Topologically, residues Met-127 to Ala-653 are cytoplasmic. Gly-198–Thr-205 serves as a coordination point for ATP. His-420 serves as a coordination point for Zn(2+). Glu-421 is an active-site residue. His-424 and Asp-496 together coordinate Zn(2+). Residues Glu-603–Ala-653 are disordered. The segment covering Ser-611–Pro-620 has biased composition (pro residues).

The protein in the central section; belongs to the AAA ATPase family. It in the C-terminal section; belongs to the peptidase M41 family. As to quaternary structure, homohexamer. Zn(2+) is required as a cofactor.

It is found in the cell membrane. Functionally, acts as a processive, ATP-dependent zinc metallopeptidase for both cytoplasmic and membrane proteins. Plays a role in the quality control of integral membrane proteins. In Conexibacter woesei (strain DSM 14684 / CCUG 47730 / CIP 108061 / JCM 11494 / NBRC 100937 / ID131577), this protein is ATP-dependent zinc metalloprotease FtsH 1.